A 309-amino-acid chain; its full sequence is Olfactory receptor 1A1 (309 aa).

The Extracellular segment spans residues 1 to 25; that stretch reads MRENNQSSTLEFILLGVTGQQEQED. Asn-5 is a glycosylation site (N-linked (GlcNAc...) asparagine). Residues 26–49 traverse the membrane as a helical segment; the sequence is FFYILFLFIYPITLIGNLLIVLAI. Over 50 to 57 the chain is Cytoplasmic; the sequence is CSDVHLHN. A helical membrane pass occupies residues 58–79; that stretch reads PMYFLLANLSLVDIFFSSVTIP. Topologically, residues 80–100 are extracellular; the sequence is KMLANHLSGSKSISFGGCLTQ. Cys-97 and Cys-189 form a disulfide bridge. The chain crosses the membrane as a helical span at residues 101 to 120; it reads MYFMIDLGNTDSYTLAAMAY. Topologically, residues 121–139 are cytoplasmic; that stretch reads DRAVAISRPLHYTTIMSPR. A helical membrane pass occupies residues 140–158; it reads SCIWLIAGSWVIGNANALP. Topologically, residues 159-195 are extracellular; the sequence is HTLLTASLSFCGNQEVANFYCDITPLLKLSCSDIHFH. Residues 196–218 traverse the membrane as a helical segment; that stretch reads VKMMYLGVGIFSVPLLCIIVSYI. Residues 219–235 are Cytoplasmic-facing; it reads RVFSTVFQVPSTKGVLK. Residues 236–258 form a helical membrane-spanning segment; sequence AFSTCGSHLTVVSLYYGTVMGMY. The Extracellular segment spans residues 259-270; that stretch reads FRPLTNYSLKDA. Asn-264 carries an N-linked (GlcNAc...) asparagine glycan. A helical transmembrane segment spans residues 271–290; the sequence is VITVMCTAVTPMLNPFIYSL. Residues 291 to 309 lie on the Cytoplasmic side of the membrane; the sequence is RNRDMKAALQKLFNKRISS.

It belongs to the G-protein coupled receptor 1 family.

Its subcellular location is the cell membrane. In terms of biological role, odorant receptor. In Gorilla gorilla gorilla (Western lowland gorilla), this protein is Olfactory receptor 1A1 (OR1A1).